Consider the following 542-residue polypeptide: Chaperonin GroEL 5 (542 aa).

ATP is bound by residues 30–33 (TLGP), Lys-51, 87–91 (DGTTT), Gly-415, and Asp-496.

Belongs to the chaperonin (HSP60) family. In terms of assembly, forms a cylinder of 14 subunits composed of two heptameric rings stacked back-to-back. Interacts with the co-chaperonin GroES.

It localises to the cytoplasm. The enzyme catalyses ATP + H2O + a folded polypeptide = ADP + phosphate + an unfolded polypeptide.. Together with its co-chaperonin GroES, plays an essential role in assisting protein folding. The GroEL-GroES system forms a nano-cage that allows encapsulation of the non-native substrate proteins and provides a physical environment optimized to promote and accelerate protein folding. In Rhizobium meliloti (strain 1021) (Ensifer meliloti), this protein is Chaperonin GroEL 5.